The sequence spans 119 residues: Beta-2-microglobulin (119 aa).

An N-terminal signal peptide occupies residues 1-20 (MARFVVVALLALLSLSGLEA). One can recognise an Ig-like C1-type domain in the interval 25–114 (PKIQVYSRHP…VTFPTPKTVK (90 aa)). A disulfide bridge connects residues C45 and C100.

The protein belongs to the beta-2-microglobulin family. Heterodimer of an alpha chain and a beta chain. Beta-2-microglobulin is the beta-chain of major histocompatibility complex class I molecules.

It localises to the secreted. Functionally, component of the class I major histocompatibility complex (MHC). Involved in the presentation of peptide antigens to the immune system. This Alouatta seniculus (Red howler monkey) protein is Beta-2-microglobulin (B2M).